The following is a 1007-amino-acid chain: Exportin-7 (1007 aa).

Belongs to the exportin family.

It localises to the nucleus. Its subcellular location is the cytoplasm. It is found in the nuclear pore complex. Mediates the nuclear export of proteins (cargos) with broad substrate specificity. This chain is Exportin-7 (xpo7), found in Dictyostelium discoideum (Social amoeba).